Consider the following 354-residue polypeptide: P2Y purinoceptor 13 (354 aa).

Residues 1 to 49 (MTAAIRRQRELSILPKVTLEAMNTTVMQGFNRSERCPRDTRIVQLVFPA) lie on the Extracellular side of the membrane. Residues asparagine 23 and asparagine 31 are each glycosylated (N-linked (GlcNAc...) asparagine). A helical transmembrane segment spans residues 50–70 (LYTVVFLTGILLNTLALWVFV). At 71-77 (HIPSSST) the chain is on the cytoplasmic side. Residues 78–98 (FIIYLKNTLVADLIMTLMLPF) traverse the membrane as a helical segment. Residues 99–117 (KILSDSHLAPWQLRAFVCR) are Extracellular-facing. Cysteine 116 and cysteine 194 are joined by a disulfide. The chain crosses the membrane as a helical span at residues 118–138 (FSSVIFYETMYVGIVLLGLIA). Residues 139-161 (FDRFLKIIRPLRNIFLKKPVFAK) lie on the Cytoplasmic side of the membrane. Residues 162 to 182 (TVSIFIWFFLFFISLPNTILS) form a helical membrane-spanning segment. Topologically, residues 183–211 (NKEATPSSVKKCASLKGPLGLKWHQMVNN) are extracellular. Residues 212–232 (ICQFIFWTVFILMLVFYVVIA) traverse the membrane as a helical segment. Residues 233-252 (KKVYDSYRKSKSKDRKNNKK) lie on the Cytoplasmic side of the membrane. A helical transmembrane segment spans residues 253 to 273 (LEGKVFVVVAVFFVCFAPFHF). Residues 274–300 (ARVPYTHSQTNNKTDCRLQNQLFIAKE) are Extracellular-facing. A glycan (N-linked (GlcNAc...) asparagine) is linked at asparagine 285. A helical membrane pass occupies residues 301-321 (TTLFLAATNICMDPLIYIFLC). Residues 322 to 333 (KKFTEKLPCMQG) are Cytoplasmic-facing. Positions 335-354 (KTTASSQENHSSQTDNITLG) are disordered.

The protein belongs to the G-protein coupled receptor 1 family. Strong expression in spleen and adult brain. Lower expression in placenta, lung, liver, spinal cord, thymus, small intestine, uterus, stomach, testis, fetal brain, and adrenal gland. Not detected in pancreas, heart, kidney, skeletal muscle, ovary or fetal aorta. Clearly detected in lymph node and bone marrow, weakly detected in peripheral blood mononuclear cells (PBMC) and in peripheral blood leukocytes (PBL), but not detected in polymorphonuclear cells (PMN). In the brain, detected in all brain regions examined.

Its subcellular location is the cell membrane. In terms of biological role, receptor for ADP. Coupled to G(i)-proteins. May play a role in hematopoiesis and the immune system. The polypeptide is P2Y purinoceptor 13 (P2RY13) (Homo sapiens (Human)).